The primary structure comprises 249 residues: MEDIVIVGRHAVKEAIVSGHTINKIWIQEGIRKQQINDILQNAKEQKLIVQTVPKSKLDNLANAPHQGVAALIAPYEYADFDQFIQSQKDKEGLSTVVILDGLEDPHNLGSILRTADASGVDGVIIPKRRSVALTQTVAKASTGAIQHVPVMRVTNLAKTIDELKEHGYWVAGAEADNATDYRDMAADMPLAIVIGSEGQGMSRLVKDKCDFYIKIPMVGHVNSLNASVAASLMMYEVYRKRHQVGDNA.

Residues Gly-196, Ile-216, and Leu-225 each contribute to the S-adenosyl-L-methionine site.

It belongs to the class IV-like SAM-binding methyltransferase superfamily. RNA methyltransferase TrmH family.

This chain is Putative TrmH family tRNA/rRNA methyltransferase, found in Staphylococcus haemolyticus (strain JCSC1435).